The sequence spans 442 residues: Probable 6-phospho-beta-glucosidase (442 aa).

5-73 provides a ligand contact to NAD(+); that stretch reads LKIVTIGGGS…VPIDIHLTLD (69 aa). Substrate contacts are provided by Arg96 and Asn150. Residues Cys172 and His202 each coordinate Mn(2+). Tyr256 acts as the Proton acceptor in catalysis.

Belongs to the glycosyl hydrolase 4 family. It depends on NAD(+) as a cofactor. A divalent metal cation serves as cofactor.

It catalyses the reaction 6-phospho-beta-D-glucosyl-(1-&gt;4)-D-glucose + H2O = D-glucose 6-phosphate + D-glucose. Its function is as follows. Hydrolyzes phospho-beta-glucosides. This Bacillus subtilis (strain 168) protein is Probable 6-phospho-beta-glucosidase (licH).